We begin with the raw amino-acid sequence, 228 residues long: Calcyclin-binding protein (228 aa).

A2 is subject to N-acetylalanine. The segment at 2–80 (ASEELQKDLE…YTVKISNYGW (79 aa)) is interaction with SIAH1. S3 carries the post-translational modification Phosphoserine. N6-acetyllysine occurs at positions 8 and 19. S34 carries the post-translational modification Phosphoserine. The 95-residue stretch at 73-167 (VKISNYGWDQ…VENTRWDYLT (95 aa)) folds into the CS domain. An interaction with SKP1 region spans residues 73-228 (VKISNYGWDQ…EKQAKGDTEF (156 aa)). Residues K85 and K118 each carry the N6-acetyllysine modification. Positions 154–228 (CRKKVENTRW…EKQAKGDTEF (75 aa)) are interaction with S100A6. An SGS domain is found at 168–228 (QVEKERKEKE…EKQAKGDTEF (61 aa)).

As to quaternary structure, interacts with protein of the S100 family S100A1, S100A6, S100B, S100P and S100A12 in a calcium-dependent manner. Component of some large E3 complex at least composed of UBE2D1, SIAH1, CACYBP/SIP, SKP1, APC and TBL1X. Interacts directly with SIAH1, SIAH2 and SKP1. In terms of processing, phosphorylated on serine residues. Phosphorylated upon induction by RA or at high calcium concentrations.

The protein resides in the cytoplasm. Its subcellular location is the nucleus. May be involved in calcium-dependent ubiquitination and subsequent proteasomal degradation of target proteins. Probably serves as a molecular bridge in ubiquitin E3 complexes. Participates in the ubiquitin-mediated degradation of beta-catenin (CTNNB1). This is Calcyclin-binding protein (CACYBP) from Pongo abelii (Sumatran orangutan).